A 107-amino-acid chain; its full sequence is SH3 domain-binding glutamic acid-rich-like protein 2 (107 aa).

The SH3-binding motif lies at 61-67 (QGNPLPP).

Belongs to the SH3BGR family. Highly expressed in brain, placenta, liver and kidney. Expressed in retina.

It localises to the nucleus. In Homo sapiens (Human), this protein is SH3 domain-binding glutamic acid-rich-like protein 2 (SH3BGRL2).